The sequence spans 611 residues: Rho GTPase-activating protein gacN (611 aa).

The region spanning 24–219 (KTFKKILKPG…VLIEEFHVLY (196 aa)) is the Rho-GAP domain. Positions 236–499 (IREDKRSTSE…TKLQKSSSSS (264 aa)) form a coiled coil. Over residues 476–491 (NQLEKEKSKLQDELTK) the composition is skewed to basic and acidic residues. A disordered region spans residues 476 to 550 (NQLEKEKSKL…TTPPPPLDED (75 aa)). 2 stretches are compositionally biased toward low complexity: residues 495 to 509 (SSSS…SSSS) and 527 to 540 (TTTT…AQQP).

Its subcellular location is the cytoplasm. Rho GTPase-activating protein involved in the signal transduction pathway. In Dictyostelium discoideum (Social amoeba), this protein is Rho GTPase-activating protein gacN (gacN).